The primary structure comprises 344 residues: DNA polymerase III subunit delta (344 aa).

It belongs to the DNA polymerase HolA subunit family. DNA polymerase III contains a core (composed of alpha, epsilon and theta chains) that associates with a tau subunit. This core dimerizes to form the POLIII' complex. PolIII' associates with the gamma complex (composed of gamma, delta, delta', psi and chi chains) and with the beta chain to form the complete DNA polymerase III complex.

It carries out the reaction DNA(n) + a 2'-deoxyribonucleoside 5'-triphosphate = DNA(n+1) + diphosphate. DNA polymerase III is a complex, multichain enzyme responsible for most of the replicative synthesis in bacteria. This DNA polymerase also exhibits 3' to 5' exonuclease activity. The delta subunit seems to interact with the gamma subunit to transfer the beta subunit on the DNA. In Haemophilus influenzae (strain ATCC 51907 / DSM 11121 / KW20 / Rd), this protein is DNA polymerase III subunit delta (holA).